Reading from the N-terminus, the 307-residue chain is MAALYACTKCHQRFPFEALSQGQQLCKECRIAHPVVKCTYCRTEYQQESKTNTICKKCAQNVQLYGTPKPCQYCNIIAAFIGNKCQRCTNSEKKYGPPYSCEQCKQQCAFDRKDDRKKVDGKLLCWLCTLSYKRVLQKTKEQRKHLSSSSRASHHEKEQYSRLSGGSHYNSQKTLSTSSIQNEIPKKKSKFESITTNGDSFSPDLALDSPGTDHFVIIAQLKEEVATLKKMLHQKDQMILEKEKKITELKADFQYQESQMRAKMNQMEKTHKEVTEQLQAKNRELLKQAAALSKSKKSEKSGAITSP.

Disordered stretches follow at residues 142–195 (QRKH…ESIT) and 287–307 (KQAAALSKSKKSEKSGAITSP). Residues 161 to 182 (SRLSGGSHYNSQKTLSTSSIQN) are compositionally biased toward polar residues. A coiled-coil region spans residues 217–299 (IIAQLKEEVA…AALSKSKKSE (83 aa)).

Belongs to the FAM76 family.

The chain is Protein FAM76A (FAM76A) from Bos taurus (Bovine).